We begin with the raw amino-acid sequence, 160 residues long: Cyanate hydratase (160 aa).

Catalysis depends on residues R100, E103, and S126.

It belongs to the cyanase family.

It carries out the reaction cyanate + hydrogencarbonate + 3 H(+) = NH4(+) + 2 CO2. Its function is as follows. Catalyzes the reaction of cyanate with bicarbonate to produce ammonia and carbon dioxide. The polypeptide is Cyanate hydratase (Aspergillus oryzae (strain ATCC 42149 / RIB 40) (Yellow koji mold)).